A 172-amino-acid chain; its full sequence is Adenine phosphoribosyltransferase (172 aa).

It belongs to the purine/pyrimidine phosphoribosyltransferase family. Homodimer.

It is found in the cytoplasm. The enzyme catalyses AMP + diphosphate = 5-phospho-alpha-D-ribose 1-diphosphate + adenine. It functions in the pathway purine metabolism; AMP biosynthesis via salvage pathway; AMP from adenine: step 1/1. Catalyzes a salvage reaction resulting in the formation of AMP, that is energically less costly than de novo synthesis. The sequence is that of Adenine phosphoribosyltransferase from Desulforamulus reducens (strain ATCC BAA-1160 / DSM 100696 / MI-1) (Desulfotomaculum reducens).